Consider the following 372-residue polypeptide: MALNDFHVSEPYTLGIELEMQVINPPGYDLSQDSSTLIDAVKPQLTAGEIKHDITESMLEMATGVCRDIDQAAAQLSAMQHVILQAASEHHLGICGGGTHPFQKWQRQEVCDNERYQRTLENFGYLIQQATVFGQHVHVGCANGDDAIYLLHGLSHFVPHFIALSAASPHMQGSDTRFACARLNIFSAFPDNGPMPWVSNWQEFAGLFRRLSYTTMIDSIKDLHWDIRPNPAFGTVEVRVMDTPLTLDHAINMAGLIQATAHWLLTERPFKPQEQDYLLYKFNRFQACRYGLEGVITDAYTGDRRRLADDTLRLLDNVTPSARKLGADSAIDALRLQVKKGGNEAQYMREFIADGGSLIGLVQKHCEIWAGQ.

It belongs to the glutamate--cysteine ligase type 2 family. YbdK subfamily. As to quaternary structure, homodimer.

The catalysed reaction is L-cysteine + L-glutamate + ATP = gamma-L-glutamyl-L-cysteine + ADP + phosphate + H(+). ATP-dependent carboxylate-amine ligase which exhibits weak glutamate--cysteine ligase activity. In Salmonella dublin (strain CT_02021853), this protein is Putative glutamate--cysteine ligase 2 (ybdK).